Consider the following 368-residue polypeptide: N-acetylneuraminate epimerase 2 (368 aa).

Positions M1–A19 are cleaved as a signal peptide. Kelch repeat units follow at residues T40 to D84, N86 to N137, K139 to A173, Y174 to G219, T222 to G265, E287 to N336, and L338 to Q367. E228 acts as the Proton acceptor in catalysis.

It belongs to the NanM family. Homodimer.

It is found in the periplasm. It carries out the reaction N-acetyl-alpha-neuraminate = N-acetyl-beta-neuraminate. Its function is as follows. Converts alpha-N-acetylneuranimic acid (Neu5Ac) to the beta-anomer, accelerating the equilibrium between the alpha- and beta-anomers. Probably facilitates sialidase-negative bacteria to compete successfully for limited amounts of extracellular Neu5Ac, which is likely taken up in the beta-anomer. In addition, the rapid removal of sialic acid from solution might be advantageous to the bacterium to damp down host responses. The protein is N-acetylneuraminate epimerase 2 of Escherichia coli O6:H1 (strain CFT073 / ATCC 700928 / UPEC).